The following is a 255-amino-acid chain: tRNA pseudouridine synthase A (255 aa).

Asp-60 acts as the Nucleophile in catalysis. Residue Tyr-118 coordinates substrate.

The protein belongs to the tRNA pseudouridine synthase TruA family. In terms of assembly, homodimer.

The catalysed reaction is uridine(38/39/40) in tRNA = pseudouridine(38/39/40) in tRNA. Functionally, formation of pseudouridine at positions 38, 39 and 40 in the anticodon stem and loop of transfer RNAs. The chain is tRNA pseudouridine synthase A from Leuconostoc mesenteroides subsp. mesenteroides (strain ATCC 8293 / DSM 20343 / BCRC 11652 / CCM 1803 / JCM 6124 / NCDO 523 / NBRC 100496 / NCIMB 8023 / NCTC 12954 / NRRL B-1118 / 37Y).